Reading from the N-terminus, the 72-residue chain is Translation initiation factor IF-1 (72 aa).

The S1-like domain maps to 1 to 72 (MAKEDVIEIE…TRGRITYRFK (72 aa)).

It belongs to the IF-1 family. Component of the 30S ribosomal translation pre-initiation complex which assembles on the 30S ribosome in the order IF-2 and IF-3, IF-1 and N-formylmethionyl-tRNA(fMet); mRNA recruitment can occur at any time during PIC assembly.

The protein resides in the cytoplasm. Functionally, one of the essential components for the initiation of protein synthesis. Stabilizes the binding of IF-2 and IF-3 on the 30S subunit to which N-formylmethionyl-tRNA(fMet) subsequently binds. Helps modulate mRNA selection, yielding the 30S pre-initiation complex (PIC). Upon addition of the 50S ribosomal subunit IF-1, IF-2 and IF-3 are released leaving the mature 70S translation initiation complex. This is Translation initiation factor IF-1 from Streptococcus mutans serotype c (strain ATCC 700610 / UA159).